Consider the following 453-residue polypeptide: Phosphoglucosamine mutase (453 aa).

Residue Ser-102 is the Phosphoserine intermediate of the active site. Positions 102, 243, 245, and 247 each coordinate Mg(2+). At Ser-102 the chain carries Phosphoserine.

It belongs to the phosphohexose mutase family. Requires Mg(2+) as cofactor. Activated by phosphorylation.

The catalysed reaction is alpha-D-glucosamine 1-phosphate = D-glucosamine 6-phosphate. Functionally, catalyzes the conversion of glucosamine-6-phosphate to glucosamine-1-phosphate. This chain is Phosphoglucosamine mutase, found in Bartonella tribocorum (strain CIP 105476 / IBS 506).